The primary structure comprises 748 residues: MSNEAKCPFNHTAGSGTSNRDWWPKQLRVDLLAQHSSKSNPMGEDFDYAEAFKSLDLAAVKADLAKVMTDSQDWWPADFGHYGPLFVRMAWHSAGTYRIGDGRGGAGRGQQRFAPLNSWPDNVNLDKARRLLWPVKQKYGNKISWADLLILTGNVALETMGFKTFGFAGGRADVWEPDLDVYWGTESTWLGGDDRYGKGKGSSSQGEIPADAHRHGQEQARTAPAGRNLENPLAAVQMGLIYVNPEGPEGNPDPLAAAHDIRETFARMAMDDEETVALIAGGHTFGKTHGAGDAKHVGREPEGEDMDSQGLGWKSSFGSGVGGDTISSGLEVTWTQTPAQWSNYFFENLFKYEWELTKSPAGAHQWVAKGADAVIPHAHGGAPLLPTMLTTDLSLRFDPAYEKISRRFLEHPEQFADAFARAWFKLTHRDLGPRSRYLGPEVPAEELIWQDPLPQAEGAQIDAADVAALKAKVLGSGLSVPELVATAWASASTFRGGDMRGGANGARIRLAPQKDWAANQPAQLAKVLKTLEGIQSAFNQGGKKVSLADLIVLAGSAAVEKAAQDAGVAVAVPFRAGRVDASQEQTDAASFAPLEPIVDGFRNFQKQRYAVRGEDMLIDKAQQLTLSAPEMTVLVGGLRVLGNNVGGSTKGMFTDRVGVLSNDFFVNLLDMATEWKSTSPAQEEFEGRDRKTGAVKWAGTRVDLVFGSNAVLRALAEVYASADAKEKFVKDFVAAWVKVMELDRFDLK.

A cross-link (tryptophyl-tyrosyl-methioninium (Trp-Tyr) (with M-268)) is located at residues 91–242; it reads WHSAGTYRIG…LAAVQMGLIY (152 aa). Residue histidine 92 is the Proton acceptor of the active site. Residues 194–223 form a disordered region; sequence DRYGKGKGSSSQGEIPADAHRHGQEQARTA. A cross-link (tryptophyl-tyrosyl-methioninium (Tyr-Met) (with W-91)) is located at residues 242 to 268; the sequence is YVNPEGPEGNPDPLAAAHDIRETFARM. Histidine 283 serves as a coordination point for heme b. Residues 288–310 are disordered; that stretch reads THGAGDAKHVGREPEGEDMDSQG. Residues 290–301 show a composition bias toward basic and acidic residues; that stretch reads GAGDAKHVGREP.

The protein belongs to the peroxidase family. Peroxidase/catalase subfamily. Homodimer or homotetramer. The cofactor is heme b. Post-translationally, formation of the three residue Trp-Tyr-Met cross-link is important for the catalase, but not the peroxidase activity of the enzyme.

The catalysed reaction is H2O2 + AH2 = A + 2 H2O. The enzyme catalyses 2 H2O2 = O2 + 2 H2O. In terms of biological role, bifunctional enzyme with both catalase and broad-spectrum peroxidase activity. This chain is Catalase-peroxidase, found in Herbaspirillum seropedicae.